The primary structure comprises 249 residues: 1-(5-phosphoribosyl)-5-[(5-phosphoribosylamino)methylideneamino] imidazole-4-carboxamide isomerase (249 aa).

Asp-10 acts as the Proton acceptor in catalysis. Asp-131 acts as the Proton donor in catalysis.

Belongs to the HisA/HisF family.

The protein localises to the cytoplasm. The enzyme catalyses 1-(5-phospho-beta-D-ribosyl)-5-[(5-phospho-beta-D-ribosylamino)methylideneamino]imidazole-4-carboxamide = 5-[(5-phospho-1-deoxy-D-ribulos-1-ylimino)methylamino]-1-(5-phospho-beta-D-ribosyl)imidazole-4-carboxamide. It functions in the pathway amino-acid biosynthesis; L-histidine biosynthesis; L-histidine from 5-phospho-alpha-D-ribose 1-diphosphate: step 4/9. This is 1-(5-phosphoribosyl)-5-[(5-phosphoribosylamino)methylideneamino] imidazole-4-carboxamide isomerase from Brevibacillus brevis (strain 47 / JCM 6285 / NBRC 100599).